A 428-amino-acid polypeptide reads, in one-letter code: MEQSFMQSAMAMGAQSKKGFSRSIAVERKNLITVCRFSVKTLLEKYTAEPIDDSSEEFINFAAILEHILSHRFKGSGSWFDGQRSFWDFIRLACSKVPNNCISSIENMENINSSRAKGRAWLRVALMEKRLSEYIATALRDSRTTRRFYDEGAIMLREEATVLTGMLIGLGAIDFSFCLKGEALDGKSEAVIDYTPYLKFTQSYDYLSDDEDGQSVDSSNSDDSVEHPYIPLVTDEESWRNKCRKMEQRFKIVNAQKGYLEELVRLRESQLKNVEMENKKLTAGLEELQQQSQKEKRELENIILELQEQLTSLIPGESHPLSKDLSIPLVNQWPSLQNYNNQEDSKLYHRGSFPSPEPHISLTTGSQRTERKQNGKSWCTAEKDYTPSMLGLCGSMSSLPSCKSLPSLRSTECLVNISAEPSPALTPS.

In terms of domain architecture, RUN spans 52–182 (DDSSEEFINF…IDFSFCLKGE (131 aa)). The stretch at 237–314 (ESWRNKCRKM…ELQEQLTSLI (78 aa)) forms a coiled coil. A disordered region spans residues 349–375 (HRGSFPSPEPHISLTTGSQRTERKQNG).

Belongs to the RUNDC3 family.

This Danio rerio (Zebrafish) protein is RUN domain-containing protein 3A (rundc3a).